Reading from the N-terminus, the 539-residue chain is Phospho-2-dehydro-3-deoxyheptonate aldolase 2, chloroplastic (539 aa).

2 disordered regions span residues 1–23 (MALA…SAPQ) and 41–70 (VHAA…APEK). The N-terminal 54 residues, 1 to 54 (MALATNSAAVSGGAAAAASSAPQPRLAATFLPMRRRTVSAVHAADPAKSNGPVQ), are a transit peptide targeting the chloroplast. Positions 7–21 (SAAVSGGAAAAASSA) are enriched in low complexity.

Belongs to the class-II DAHP synthase family.

It is found in the plastid. The protein localises to the chloroplast. It carries out the reaction D-erythrose 4-phosphate + phosphoenolpyruvate + H2O = 7-phospho-2-dehydro-3-deoxy-D-arabino-heptonate + phosphate. The protein operates within metabolic intermediate biosynthesis; chorismate biosynthesis; chorismate from D-erythrose 4-phosphate and phosphoenolpyruvate: step 1/7. The sequence is that of Phospho-2-dehydro-3-deoxyheptonate aldolase 2, chloroplastic (DAHPS2) from Oryza sativa subsp. japonica (Rice).